Here is a 292-residue protein sequence, read N- to C-terminus: E3 ubiquitin-protein ligase RNF144A (292 aa).

The tract at residues 16–236 (PLVSCKLCLG…YDKGPCRNKL (221 aa)) is TRIAD supradomain. Zn(2+) is bound by residues Cys-20, Cys-23, Cys-43, Cys-46, Cys-111, Cys-116, Cys-135, Cys-138, Cys-143, Cys-146, His-151, Cys-156, Cys-185, and Cys-188. The RING-type 1 zinc-finger motif lies at 20–70 (CKLCLGEYPAEQMTTIAQCQCIFCTLCLKQYVELLIKEGLETAISCPDAAC). The IBR-type zinc-finger motif lies at 91–156 (QRYKKLQFER…KARWHPGQGC (66 aa)). The RING-type 2; atypical zinc finger occupies 185–214 (CPKCRVYIERDEGCAQMMCKNCKHAFCWYC). The active site involves Cys-198. Positions 203, 206, 211, 214, 226, and 232 each coordinate Zn(2+). Residues 250–270 (VVGIFAGFGLLLLVASPFLLL) traverse the membrane as a helical segment.

Belongs to the RBR family. RNF144 subfamily. Self-associates. Interacts with UBE2L3. Post-translationally, autoubiquitinated.

It localises to the cell membrane. It is found in the cytoplasmic vesicle membrane. The enzyme catalyses [E2 ubiquitin-conjugating enzyme]-S-ubiquitinyl-L-cysteine + [acceptor protein]-L-lysine = [E2 ubiquitin-conjugating enzyme]-L-cysteine + [acceptor protein]-N(6)-ubiquitinyl-L-lysine.. The protein operates within protein modification; protein ubiquitination. In terms of biological role, E3 ubiquitin-protein ligase which accepts ubiquitin from E2 ubiquitin-conjugating enzymes UBE2L3 and UBE2L6 in the form of a thioester and then directly transfers the ubiquitin to targeted substrates. Mediates the ubiquitination and degradation of the DNA damage kinase PRKDC during DNA damage. Positively regulates DNA virus or exogenous cytosolic DNA-triggered innate immune response by mediating STING1 ubiquitination and increasing its 'Lys-6'-linked ubiquitination and translocation from the endoplasmic reticulum to the Golgi leading to downstream signaling pathways. Plays a positive role in EGF-dependent cell proliferation by prolonging EGF/EGFR signaling during EGF stimulation through EGFR ubiquitination. Increases ERK activity independently of EGFR signaling by promoting polyubiquitination and subsequent degradation of VRK3 in the cytosol. This is E3 ubiquitin-protein ligase RNF144A (Rnf144a) from Mus musculus (Mouse).